The following is a 21-amino-acid chain: GMATKAGTIVGKIAKVALNAL.

Position 21 is a leucine amide (Leu21).

As to expression, expressed by the skin glands.

It is found in the secreted. Its function is as follows. Antimicrobial peptide. In Xenopus ruwenzoriensis (Uganda clawed frog), this protein is Peptide PGLa-R4.